A 21-amino-acid polypeptide reads, in one-letter code: SLVQFEKMIKEVAGKNGVPWY.

It belongs to the phospholipase A2 family. Group II subfamily. Ca(2+) is required as a cofactor. In terms of tissue distribution, expressed by the venom gland.

It is found in the secreted. The enzyme catalyses a 1,2-diacyl-sn-glycero-3-phosphocholine + H2O = a 1-acyl-sn-glycero-3-phosphocholine + a fatty acid + H(+). Snake venom phospholipase A2 (PLA2) that induces a conspicuous local myotoxic effect and moderate footpad edema. In vitro, it shows anticoagulant effects and is not cytotoxic on myoblast but is able to lyse myotubes. PLA2 catalyzes the calcium-dependent hydrolysis of the 2-acyl groups in 3-sn-phosphoglycerides. This chain is Phospholipase A2 crotoxin basic chain, found in Crotalus durissus cumanensis (South American rattlesnake).